We begin with the raw amino-acid sequence, 421 residues long: Eukaryotic translation initiation factor 3 subunit E (421 aa).

Residues 215–394 enclose the PCI domain; sequence FFQNDTKGKD…STVILNHPSV (180 aa).

It belongs to the eIF-3 subunit E family. In terms of assembly, component of the eukaryotic translation initiation factor 3 (eIF-3) complex.

It is found in the cytoplasm. Functionally, component of the eukaryotic translation initiation factor 3 (eIF-3) complex, which is involved in protein synthesis of a specialized repertoire of mRNAs and, together with other initiation factors, stimulates binding of mRNA and methionyl-tRNAi to the 40S ribosome. The eIF-3 complex specifically targets and initiates translation of a subset of mRNAs involved in cell proliferation. In Yarrowia lipolytica (strain CLIB 122 / E 150) (Yeast), this protein is Eukaryotic translation initiation factor 3 subunit E.